A 336-amino-acid chain; its full sequence is Neuropeptides B/W receptor type 2 (336 aa).

Positions 1–25 (MMEATGLEGLESTSSPCPGSTGTGL) are disordered. The Extracellular segment spans residues 1-45 (MMEATGLEGLESTSSPCPGSTGTGLSWDNGTRHNATFPEPLPALY). Residues 12–25 (STSSPCPGSTGTGL) are compositionally biased toward low complexity. Residues asparagine 29 and asparagine 34 are each glycosylated (N-linked (GlcNAc...) asparagine). Residues 46 to 68 (VLLPVVYSVICAVGLVGNAAVIC) form a helical membrane-spanning segment. At 69 to 80 (VILRAPKMKTVT) the chain is on the cytoplasmic side. Residues 81-103 (HVFILNLAIADGLFTLVLPTNIA) traverse the membrane as a helical segment. At 104-127 (EHLLQRWPFGEVLCKLVLAIDHCN) the chain is on the extracellular side. The cysteines at positions 117 and 197 are disulfide-linked. The chain crosses the membrane as a helical span at residues 128 to 146 (IFSSVYFLAAMSIDRYLVV). Topologically, residues 147 to 165 (LATARSRRMPRRTVHRAKV) are cytoplasmic. The chain crosses the membrane as a helical span at residues 166–188 (ASLCVWLGVTVAVLPFLTFAGVY). Residues 189–213 (NNELQVTSCGLSFPRPERAWFQASR) are Extracellular-facing. A helical membrane pass occupies residues 214 to 236 (IYTLVLGFVVPMCTLCVLYADLL). Topologically, residues 237-256 (RRLRALRLHSGAKALGKAKR) are cytoplasmic. The helical transmembrane segment at 257–279 (KVSLLVLAVLAVGLLCWTPFHLA) threads the bilayer. The Extracellular segment spans residues 280–293 (SIVALTTDLPQTPL). Residues 294–316 (VIIVSYVVTSLSYTSSCLNPFLY) traverse the membrane as a helical segment. Residues 317-336 (AFLDHSFRKSLRTACRCQGA) lie on the Cytoplasmic side of the membrane.

It belongs to the G-protein coupled receptor 1 family.

It is found in the cell membrane. Functionally, interacts specifically with a number of opioid ligands. Receptor for neuropeptides B and W, which may be involved in neuroendocrine system regulation, food intake and the organization of other signals. In Bos taurus (Bovine), this protein is Neuropeptides B/W receptor type 2 (NPBWR2).